Consider the following 428-residue polypeptide: Cyclic AMP-responsive element-binding protein 3-like protein 4 (428 aa).

The required for transcriptional activation stretch occupies residues 1-68 (MLLGSLFEQT…EFLQMMINPN (68 aa)). Residues 1–294 (MLLGSLFEQT…QTSNKAAQTS (294 aa)) lie on the Cytoplasmic side of the membrane. The tract at residues 71-111 (YSTGPAAAESPESDSGFSDDPRPDTPPQSETSPPLPQPTPV) is disordered. Residues 216–279 (ILKKVRRKIR…ISLITQLRKL (64 aa)) form the bZIP domain. The basic motif stretch occupies residues 218–247 (KKVRRKIRNKQSAQDSRRRKKEYIDGLESR). The tract at residues 258–279 (LHKKVVELEKHNISLITQLRKL) is leucine-zipper. Residues 295–315 (TCVLILLFSLALLVFPSYSPF) form a helical; Signal-anchor for type II membrane protein membrane-spanning segment. The Lumenal segment spans residues 316 to 428 (RSRPSASQED…LSKTARADEM (113 aa)). Residues 339–428 (NKGGFSEVAD…LSKTARADEM (90 aa)) form a disordered region. Positions 354 to 368 (TLHRAQQREEGDPGR) are enriched in basic and acidic residues. Asn-418 is a glycosylation site (N-linked (GlcNAc...) asparagine).

The protein belongs to the bZIP family. ATF subfamily. As to quaternary structure, binds DNA as a dimer. In terms of processing, controlled by regulated intramembrane proteolysis (RIP). A fragment containing the cytoplasmic transcription factor domain is released by proteolysis. The cleavage seems to be performed sequentially by site-1 and site-2 proteases (PS1 and PS2).

The protein localises to the endoplasmic reticulum membrane. Its subcellular location is the nucleus. In terms of biological role, transcriptional activator. The sequence is that of Cyclic AMP-responsive element-binding protein 3-like protein 4 (creb3l4) from Xenopus tropicalis (Western clawed frog).